The primary structure comprises 185 residues: Ubiquitin-conjugating enzyme E2 5 (185 aa).

The 148-residue stretch at 1–148 folds into the UBC core domain; it reads MSSPSKRREM…VKEYCEKYAK (148 aa). Catalysis depends on Cys-85, which acts as the Glycyl thioester intermediate. The segment at 146–185 is disordered; that stretch reads YAKPRADTEEMSSDDEMSEDEYASDGDDEDDVAIAGKLDP. Over residues 154-177 the composition is skewed to acidic residues; that stretch reads EEMSSDDEMSEDEYASDGDDEDDV.

This sequence belongs to the ubiquitin-conjugating enzyme family. As to expression, expressed in developing ovules, but not in vascular tissues.

It carries out the reaction S-ubiquitinyl-[E1 ubiquitin-activating enzyme]-L-cysteine + [E2 ubiquitin-conjugating enzyme]-L-cysteine = [E1 ubiquitin-activating enzyme]-L-cysteine + S-ubiquitinyl-[E2 ubiquitin-conjugating enzyme]-L-cysteine.. The protein operates within protein modification; protein ubiquitination. Functionally, accepts the ubiquitin from the E1 complex and catalyzes its covalent attachment to other proteins. The sequence is that of Ubiquitin-conjugating enzyme E2 5 (UBC5) from Arabidopsis thaliana (Mouse-ear cress).